Consider the following 143-residue polypeptide: Transcriptional regulator SlyA (143 aa).

The 134-residue stretch at 2–135 folds into the HTH marR-type domain; sequence ESTLGSDLAR…LANLIERLEQ (134 aa). Residues 49–72 constitute a DNA-binding region (H-T-H motif); sequence QIQLAKAIGIEQPSLVRTLDQLED.

Belongs to the SlyA family. Homodimer.

Transcription regulator that can specifically activate or repress expression of target genes. This chain is Transcriptional regulator SlyA, found in Edwardsiella ictaluri (strain 93-146).